The following is a 25-amino-acid chain: Xenoposin precursor fragment BM2 (25 aa).

As to expression, expressed by the skin glands.

It is found in the secreted. Functionally, antimicrobial peptide. The protein is Xenoposin precursor fragment BM2 of Xenopus boumbaensis (Mawa clawed frog).